The following is a 354-amino-acid chain: Uroporphyrinogen decarboxylase (354 aa).

Residues 27-31 (RQAGR), Asp77, Tyr154, Thr209, and His327 contribute to the substrate site.

It belongs to the uroporphyrinogen decarboxylase family. As to quaternary structure, homodimer.

The protein resides in the cytoplasm. The catalysed reaction is uroporphyrinogen III + 4 H(+) = coproporphyrinogen III + 4 CO2. The protein operates within porphyrin-containing compound metabolism; protoporphyrin-IX biosynthesis; coproporphyrinogen-III from 5-aminolevulinate: step 4/4. Functionally, catalyzes the decarboxylation of four acetate groups of uroporphyrinogen-III to yield coproporphyrinogen-III. In Salmonella schwarzengrund (strain CVM19633), this protein is Uroporphyrinogen decarboxylase.